Here is a 401-residue protein sequence, read N- to C-terminus: tRNA N6-adenosine threonylcarbamoyltransferase (401 aa).

H111 and H115 together coordinate Fe cation. Residues 191–195 (LASGG), D223, G236, and N336 contribute to the substrate site. D364 is a Fe cation binding site.

This sequence belongs to the KAE1 / TsaD family. Requires Fe(2+) as cofactor.

The protein resides in the cytoplasm. It catalyses the reaction L-threonylcarbamoyladenylate + adenosine(37) in tRNA = N(6)-L-threonylcarbamoyladenosine(37) in tRNA + AMP + H(+). Functionally, required for the formation of a threonylcarbamoyl group on adenosine at position 37 (t(6)A37) in tRNAs that read codons beginning with adenine. Is involved in the transfer of the threonylcarbamoyl moiety of threonylcarbamoyl-AMP (TC-AMP) to the N6 group of A37, together with TsaE and TsaB. TsaD likely plays a direct catalytic role in this reaction. The protein is tRNA N6-adenosine threonylcarbamoyltransferase of Tropheryma whipplei (strain TW08/27) (Whipple's bacillus).